Consider the following 443-residue polypeptide: uncharacterized protein (443 aa).

Residues histidine 164 and aspartate 386 each act as proton acceptor in the active site.

It belongs to the plant acyltransferase family.

This is an uncharacterized protein from Arabidopsis thaliana (Mouse-ear cress).